The primary structure comprises 478 residues: ATP synthase subunit beta (478 aa).

160–167 (GGAGVGKT) is an ATP binding site.

It belongs to the ATPase alpha/beta chains family. F-type ATPases have 2 components, CF(1) - the catalytic core - and CF(0) - the membrane proton channel. CF(1) has five subunits: alpha(3), beta(3), gamma(1), delta(1), epsilon(1). CF(0) has three main subunits: a(1), b(2) and c(9-12). The alpha and beta chains form an alternating ring which encloses part of the gamma chain. CF(1) is attached to CF(0) by a central stalk formed by the gamma and epsilon chains, while a peripheral stalk is formed by the delta and b chains.

It is found in the cell inner membrane. It carries out the reaction ATP + H2O + 4 H(+)(in) = ADP + phosphate + 5 H(+)(out). In terms of biological role, produces ATP from ADP in the presence of a proton gradient across the membrane. The catalytic sites are hosted primarily by the beta subunits. The chain is ATP synthase subunit beta from Orientia tsutsugamushi (strain Boryong) (Rickettsia tsutsugamushi).